Consider the following 581-residue polypeptide: Arginine--tRNA ligase (581 aa).

The 'HIGH' region motif lies at 126-136; sequence PNLAKEMHVGH.

The protein belongs to the class-I aminoacyl-tRNA synthetase family. Monomer.

The protein localises to the cytoplasm. It catalyses the reaction tRNA(Arg) + L-arginine + ATP = L-arginyl-tRNA(Arg) + AMP + diphosphate. The polypeptide is Arginine--tRNA ligase (Shewanella putrefaciens (strain CN-32 / ATCC BAA-453)).